We begin with the raw amino-acid sequence, 144 residues long: D-aminoacyl-tRNA deacylase (144 aa).

The short motif at 136–137 (GP) is the Gly-cisPro motif, important for rejection of L-amino acids element.

It belongs to the DTD family. As to quaternary structure, homodimer.

The protein resides in the cytoplasm. The catalysed reaction is glycyl-tRNA(Ala) + H2O = tRNA(Ala) + glycine + H(+). It carries out the reaction a D-aminoacyl-tRNA + H2O = a tRNA + a D-alpha-amino acid + H(+). Functionally, an aminoacyl-tRNA editing enzyme that deacylates mischarged D-aminoacyl-tRNAs. Also deacylates mischarged glycyl-tRNA(Ala), protecting cells against glycine mischarging by AlaRS. Acts via tRNA-based rather than protein-based catalysis; rejects L-amino acids rather than detecting D-amino acids in the active site. By recycling D-aminoacyl-tRNA to D-amino acids and free tRNA molecules, this enzyme counteracts the toxicity associated with the formation of D-aminoacyl-tRNA entities in vivo and helps enforce protein L-homochirality. The protein is D-aminoacyl-tRNA deacylase of Vibrio parahaemolyticus serotype O3:K6 (strain RIMD 2210633).